The primary structure comprises 399 residues: MAHITINQYLQQVQEAIDSKDGFNCADLVSFKHPHVANARLQLLSPEEKCQQVLEPPYDEMFAAHLRCINAASNHDFVEAYKYQTLVVQSFLKSFQAHKEENWALPIMYSITLDLRIFANNADQQLVKKGKGKVGDMLEKAAEILMSCFRVCASDTRAAFEDSKKWGMLFLVNQLFKIYFKISKLHLCKPLIRAIDSSNFKEEYTMAQRVTFKYYVGRKSMFDSDFKKAEEYLSFAFEHCHRSSQKNKRMILIYLLPVKMLLGHMPTIHLLKKYDLMQFAEVTKAVSEGNLLLLTEALTKHETFFIRCGIFLILEKLKIISYRNLFKKVYLLLKTHQLSLDAFLVALKFMEVGDVDIDEVQCIIANLIYMGHIKGYISHQHQKLVVSKQNPFPPLSTVC.

The PCI domain occupies 210-391; that stretch reads VTFKYYVGRK…QKLVVSKQNP (182 aa).

It belongs to the CSN12 family.

The sequence is that of PCI domain-containing protein 2 (pcid2) from Xenopus laevis (African clawed frog).